A 188-amino-acid polypeptide reads, in one-letter code: Hypoxanthine/guanine phosphoribosyltransferase (188 aa).

Belongs to the purine/pyrimidine phosphoribosyltransferase family. Archaeal HPRT subfamily. In terms of assembly, homodimer.

It localises to the cytoplasm. The enzyme catalyses IMP + diphosphate = hypoxanthine + 5-phospho-alpha-D-ribose 1-diphosphate. The catalysed reaction is GMP + diphosphate = guanine + 5-phospho-alpha-D-ribose 1-diphosphate. The protein operates within purine metabolism; IMP biosynthesis via salvage pathway; IMP from hypoxanthine: step 1/1. Functionally, catalyzes a salvage reaction resulting in the formation of IMP that is energically less costly than de novo synthesis. The polypeptide is Hypoxanthine/guanine phosphoribosyltransferase (Methanobrevibacter ruminantium (strain ATCC 35063 / DSM 1093 / JCM 13430 / OCM 146 / M1) (Methanobacterium ruminantium)).